We begin with the raw amino-acid sequence, 361 residues long: Phospho-N-acetylmuramoyl-pentapeptide-transferase (361 aa).

10 consecutive transmembrane segments (helical) span residues 28 to 48, 73 to 93, 97 to 117, 134 to 154, 168 to 188, 200 to 220, 237 to 257, 264 to 284, 289 to 309, and 338 to 358; these read LAALTALSISFLIGPAMIRSL, TMGGALILMAVIITTLLWADL, YIWLVLLTTLGFGAIGWVDDY, FFWQSIIALLVAVYLAMTAEL, VAIPLGSFLFIILTYLVIVGS, GLAIMPTVMISGALAIFAYVA, AGELAVFCGALAGAGLAFLWF, VFMGDVGALALGAALGVITVI, IVLVIMGGVFVMEALSVMIQV, and QVVVRFWIITIILVLIGLSTL.

It belongs to the glycosyltransferase 4 family. MraY subfamily. Requires Mg(2+) as cofactor.

It is found in the cell inner membrane. It carries out the reaction UDP-N-acetyl-alpha-D-muramoyl-L-alanyl-gamma-D-glutamyl-meso-2,6-diaminopimeloyl-D-alanyl-D-alanine + di-trans,octa-cis-undecaprenyl phosphate = di-trans,octa-cis-undecaprenyl diphospho-N-acetyl-alpha-D-muramoyl-L-alanyl-D-glutamyl-meso-2,6-diaminopimeloyl-D-alanyl-D-alanine + UMP. It functions in the pathway cell wall biogenesis; peptidoglycan biosynthesis. Its function is as follows. Catalyzes the initial step of the lipid cycle reactions in the biosynthesis of the cell wall peptidoglycan: transfers peptidoglycan precursor phospho-MurNAc-pentapeptide from UDP-MurNAc-pentapeptide onto the lipid carrier undecaprenyl phosphate, yielding undecaprenyl-pyrophosphoryl-MurNAc-pentapeptide, known as lipid I. The polypeptide is Phospho-N-acetylmuramoyl-pentapeptide-transferase (Nitrosomonas eutropha (strain DSM 101675 / C91 / Nm57)).